The sequence spans 675 residues: TOM1-like protein 9 (675 aa).

In terms of domain architecture, VHS spans 9-138 (ATSEMLIGPD…ELLRAGAVFP (130 aa)). 5 disordered regions span residues 144 to 181 (SAPVFTPPQTQPLTSYPPNLRNAGPGNDVPEPSAEPEF), 270 to 322 (LPGT…QLAL), 371 to 524 (FSDN…YAQM), 542 to 561 (QNGVYMPNQPNQALGSGYQP), and 622 to 675 (RDQT…AGTM). Residues 180 to 268 (EFPTLSLSEI…VLTNYEAIAS (89 aa)) form the GAT domain. Polar residues-rich tracts occupy residues 299 to 317 (GDSSNQANGATSSSGNGVL) and 372 to 435 (SDNT…GQGV). Over residues 436 to 451 (SSPWSSQPAQQPVQPS) the composition is skewed to low complexity. Composition is skewed to polar residues over residues 470 to 481 (QDYSPSAESGSP) and 488 to 524 (PTQTAFTHAQPVNNNNPYPQIPQTGPPVNNNSPYAQM). Over residues 646–661 (NKPEDKLFGDLVDISK) the composition is skewed to basic and acidic residues.

The protein belongs to the TOM1 family. As to quaternary structure, interacts with ELC/VPS23A and ELCL/VPS23B. In terms of tissue distribution, ubiquitously expressed.

It localises to the cytoplasm. Its subcellular location is the membrane. Functionally, might contribute to the loading of the ESCRT machinery. The chain is TOM1-like protein 9 from Arabidopsis thaliana (Mouse-ear cress).